Here is a 157-residue protein sequence, read N- to C-terminus: MRIGHGYDVHRFAEGDFVTLGGVRIPHRFGLLAHSDGDVLLHALCDALLGAAALGDIGRHFPDTDPRFKGVDSRVLLRHVVALVREKGWRVGNVDATIVAQAPKMAPHIERMRLSIAEDLQVGVEQVNVKATTTEKLGFTGREEGIAVHAVALLLAL.

2 residues coordinate a divalent metal cation: Asp-8 and His-10. 4-CDP-2-C-methyl-D-erythritol 2-phosphate contacts are provided by residues 8 to 10 (DVH) and 34 to 35 (HS). His-42 provides a ligand contact to a divalent metal cation. 4-CDP-2-C-methyl-D-erythritol 2-phosphate contacts are provided by residues 56–58 (DIG), 61–65 (FPDTD), 100–106 (AQAPKMA), 132–135 (TTTE), Phe-139, and Arg-142.

Belongs to the IspF family. As to quaternary structure, homotrimer. Requires a divalent metal cation as cofactor.

The catalysed reaction is 4-CDP-2-C-methyl-D-erythritol 2-phosphate = 2-C-methyl-D-erythritol 2,4-cyclic diphosphate + CMP. Its pathway is isoprenoid biosynthesis; isopentenyl diphosphate biosynthesis via DXP pathway; isopentenyl diphosphate from 1-deoxy-D-xylulose 5-phosphate: step 4/6. Involved in the biosynthesis of isopentenyl diphosphate (IPP) and dimethylallyl diphosphate (DMAPP), two major building blocks of isoprenoid compounds. Catalyzes the conversion of 4-diphosphocytidyl-2-C-methyl-D-erythritol 2-phosphate (CDP-ME2P) to 2-C-methyl-D-erythritol 2,4-cyclodiphosphate (ME-CPP) with a corresponding release of cytidine 5-monophosphate (CMP). The chain is 2-C-methyl-D-erythritol 2,4-cyclodiphosphate synthase from Azotobacter vinelandii (strain DJ / ATCC BAA-1303).